Consider the following 352-residue polypeptide: S-adenosylmethionine:tRNA ribosyltransferase-isomerase (352 aa).

Belongs to the QueA family. In terms of assembly, monomer.

It localises to the cytoplasm. It carries out the reaction 7-aminomethyl-7-carbaguanosine(34) in tRNA + S-adenosyl-L-methionine = epoxyqueuosine(34) in tRNA + adenine + L-methionine + 2 H(+). Its pathway is tRNA modification; tRNA-queuosine biosynthesis. Transfers and isomerizes the ribose moiety from AdoMet to the 7-aminomethyl group of 7-deazaguanine (preQ1-tRNA) to give epoxyqueuosine (oQ-tRNA). This Solibacter usitatus (strain Ellin6076) protein is S-adenosylmethionine:tRNA ribosyltransferase-isomerase.